Consider the following 311-residue polypeptide: Ribosomal RNA small subunit methyltransferase A (311 aa).

6 residues coordinate S-adenosyl-L-methionine: asparagine 29, valine 31, glycine 56, glutamate 77, aspartate 107, and asparagine 126.

This sequence belongs to the class I-like SAM-binding methyltransferase superfamily. rRNA adenine N(6)-methyltransferase family. RsmA subfamily.

The protein localises to the cytoplasm. The catalysed reaction is adenosine(1518)/adenosine(1519) in 16S rRNA + 4 S-adenosyl-L-methionine = N(6)-dimethyladenosine(1518)/N(6)-dimethyladenosine(1519) in 16S rRNA + 4 S-adenosyl-L-homocysteine + 4 H(+). Functionally, specifically dimethylates two adjacent adenosines (A1518 and A1519) in the loop of a conserved hairpin near the 3'-end of 16S rRNA in the 30S particle. May play a critical role in biogenesis of 30S subunits. The polypeptide is Ribosomal RNA small subunit methyltransferase A (Mycolicibacterium vanbaalenii (strain DSM 7251 / JCM 13017 / BCRC 16820 / KCTC 9966 / NRRL B-24157 / PYR-1) (Mycobacterium vanbaalenii)).